The sequence spans 675 residues: Acetyl-coenzyme A synthetase 1 (675 aa).

Over residues 1–10 (MPESTQQSHL) the composition is skewed to polar residues. Residues 1-32 (MPESTQQSHLSLDHEKMQQPPKGFTERSKTKP) are disordered. Residues 212 to 215 (RGGK) and T331 contribute to the CoA site. ATP contacts are provided by residues 407-409 (GEP), 431-436 (DTYWQT), D522, and R537. CoA is bound at residue S545. An ATP-binding site is contributed by R548. A CoA-binding site is contributed by R609.

Belongs to the ATP-dependent AMP-binding enzyme family.

The enzyme catalyses acetate + ATP + CoA = acetyl-CoA + AMP + diphosphate. The polypeptide is Acetyl-coenzyme A synthetase 1 (ACS1) (Candida albicans (Yeast)).